A 545-amino-acid polypeptide reads, in one-letter code: CTP synthase (545 aa).

Residues 1–265 form an amidoligase domain region; the sequence is MSRFIFVTGG…DAIVVEKFGL (265 aa). Position 13 (serine 13) interacts with CTP. Serine 13 contacts UTP. Residue 14 to 19 coordinates ATP; that stretch reads SLGKGI. Position 54 (tyrosine 54) interacts with L-glutamine. Aspartate 71 is a binding site for ATP. Residues aspartate 71 and glutamate 139 each contribute to the Mg(2+) site. CTP is bound by residues 146–148, 186–191, and lysine 222; these read DIE and KTKPTQ. Residues 186–191 and lysine 222 contribute to the UTP site; that span reads KTKPTQ. Residues 290–541 form the Glutamine amidotransferase type-1 domain; it reads TVGMVGKYIE…VAAALAEQKA (252 aa). Glycine 351 lines the L-glutamine pocket. Cysteine 378 (nucleophile; for glutamine hydrolysis) is an active-site residue. Residues 379 to 382, glutamate 402, and arginine 469 each bind L-glutamine; that span reads LGMQ. Residues histidine 514 and glutamate 516 contribute to the active site.

The protein belongs to the CTP synthase family. As to quaternary structure, homotetramer.

It catalyses the reaction UTP + L-glutamine + ATP + H2O = CTP + L-glutamate + ADP + phosphate + 2 H(+). It carries out the reaction L-glutamine + H2O = L-glutamate + NH4(+). The enzyme catalyses UTP + NH4(+) + ATP = CTP + ADP + phosphate + 2 H(+). Its pathway is pyrimidine metabolism; CTP biosynthesis via de novo pathway; CTP from UDP: step 2/2. With respect to regulation, allosterically activated by GTP, when glutamine is the substrate; GTP has no effect on the reaction when ammonia is the substrate. The allosteric effector GTP functions by stabilizing the protein conformation that binds the tetrahedral intermediate(s) formed during glutamine hydrolysis. Inhibited by the product CTP, via allosteric rather than competitive inhibition. Catalyzes the ATP-dependent amination of UTP to CTP with either L-glutamine or ammonia as the source of nitrogen. Regulates intracellular CTP levels through interactions with the four ribonucleotide triphosphates. The sequence is that of CTP synthase from Alcanivorax borkumensis (strain ATCC 700651 / DSM 11573 / NCIMB 13689 / SK2).